The chain runs to 535 residues: RAN GTPase-activating protein 1 (535 aa).

Residues 1-115 form a WPP region; that stretch reads MDHSAKTTQN…EESEVEVSKD (115 aa). LRR repeat units follow at residues 208–231, 236–259, 264–287, 320–343, 353–376, 377–400, 405–428, 433–456, and 461–488; these read GSKL…AFAS, QHDL…AVRE, TDKI…AIAE, CSHL…ALAK, EIYM…LLKS, APSL…NLAA, KQSL…LIAK, HDQL…ALAQ, and KNTF…MFKD. The interval 493–535 is disordered; the sequence is LVPLDDNDPEGEDFEDEDEEEEGEDGNELESKLGSLKIKQGEE. A compositionally biased stretch (acidic residues) spans 497 to 520; it reads DDNDPEGEDFEDEDEEEEGEDGNE.

This sequence belongs to the RNA1 family. Homodimer. Interacts with WIP1 through its WPP domain. Component of Ran complexes at least composed of WIT1 or WIT2, RANGAP1 or RANGAP2, and WIP1 or WIP2 or WIP3. Interacts directly with WIT1, WIP2 and WIP3. Interacts with POK1.

Its subcellular location is the cytoplasm. The protein localises to the nucleus envelope. It localises to the nucleus membrane. It is found in the cytoskeleton. The protein resides in the spindle. Its subcellular location is the phragmoplast. Its function is as follows. GTPase activator for the nuclear Ras-related regulatory protein Ran, converting it to the putatively inactive GDP-bound state. Plays a role in spatial signaling during cell division. The protein is RAN GTPase-activating protein 1 (RANGAP1) of Arabidopsis thaliana (Mouse-ear cress).